We begin with the raw amino-acid sequence, 890 residues long: Receptor like protein 23 (890 aa).

The signal sequence occupies residues 1-22; sequence MSKALLHLHFLSLFLLCCVCHS. Over 23-850 the chain is Extracellular; it reads SIFTLNFHFT…EEEEEVLNGR (828 aa). 5 N-linked (GlcNAc...) asparagine glycosylation sites follow: N58, N70, N91, N109, and N145. LRR repeat units lie at residues 97 to 121, 123 to 145, 146 to 171, 173 to 195, 196 to 218, 220 to 243, 244 to 268, 270 to 290, 291 to 316, 318 to 339, 340 to 363, 364 to 389, 391 to 411, 412 to 436, 438 to 461, 462 to 485, 487 to 506, 507 to 527, 528 to 551, 553 to 575, 577 to 598, 599 to 623, 626 to 650, 699 to 724, 726 to 747, 748 to 771, and 773 to 796; these read FHQL…GFGN, KRLE…SFSN, LTML…GLRK, IVLD…LFEL, HQLR…KFGN, HRLE…ISNL, TRLT…NLTN, YELD…LLTL, PFLA…STSS, LEIM…ISKL, INLK…LFSS, LKSL…SYIP, TLEM…ILKT, LKEL…LWSL, LLQS…ILVN, SSVL…PLSI, GFGV…ICNR, SSLA…PPCL, RNLE…LCDG, SLRT…FVNC, SLKF…WLKA, LPNL…HQGP, FPEL…YFVN, LTSY…GLLK, LIAV…MANL, ENLE…LGSI, and FLAY…QITG. 4 N-linked (GlcNAc...) asparagine glycosylation sites follow: N189, N207, N242, and N265. Residue N311 is glycosylated (N-linked (GlcNAc...) asparagine). N351 carries N-linked (GlcNAc...) asparagine glycosylation. N461 carries an N-linked (GlcNAc...) asparagine glycan. N-linked (GlcNAc...) asparagine glycosylation is found at N505 and N518. A glycan (N-linked (GlcNAc...) asparagine) is linked at N574. N-linked (GlcNAc...) asparagine glycosylation is present at N730. An N-linked (GlcNAc...) asparagine glycan is attached at N778. The chain crosses the membrane as a helical span at residues 851-871; the sequence is AVAIGYGSGLLLGLAIAQVIA. The Cytoplasmic portion of the chain corresponds to 872–890; it reads SYKPEWLVKIIGLNKRRKR.

Belongs to the RLP family. In terms of assembly, directly interacts with a 20-mer fragment (nlp20) from NLPs through its extracellular LRR domain. Component of a trimeric complex composed of RLP23, SOBIR1 and BAK1. BAK1 is recruited into a pre-formed RLP23-SOBIR1 complex in a ligand-dependent manner. Interacts with SOBIR1.

Its subcellular location is the cell membrane. Functionally, involved in the perception of necrosis and ethylene-inducing peptide 1-like proteins (NLPs), that act as extracellular signals mediating immune activation. Component of the RLP23-SOBIR1-BAK1 complex that mediates NLP-triggered immunity. This is Receptor like protein 23 from Arabidopsis thaliana (Mouse-ear cress).